The sequence spans 462 residues: Histidine--tRNA ligase (462 aa).

The protein belongs to the class-II aminoacyl-tRNA synthetase family. Homodimer.

It localises to the cytoplasm. The catalysed reaction is tRNA(His) + L-histidine + ATP = L-histidyl-tRNA(His) + AMP + diphosphate + H(+). The chain is Histidine--tRNA ligase (hisS) from Nostoc sp. (strain PCC 7120 / SAG 25.82 / UTEX 2576).